A 604-amino-acid polypeptide reads, in one-letter code: Prostaglandin G/H synthase 2 (604 aa).

Residues 1-17 (MLARALLLCAAVALSHA) form the signal peptide. One can recognise an EGF-like domain in the interval 18–55 (ANPCCSNPCQNRGVCMTMGFDQYKCDCTRTGFYGENCS). 4 disulfides stabilise this stretch: C21–C32, C22–C145, C26–C42, and C44–C54. N-linked (GlcNAc...) asparagine glycosylation is present at N53. R106 is a binding site for substrate. N130 carries N-linked (GlcNAc...) asparagine glycosylation. H193 acts as the Proton acceptor in catalysis. Y341 lines the substrate pocket. Catalysis depends on Y371, which acts as the For cyclooxygenase activity. Residue H374 participates in heme b binding. Residue N396 is glycosylated (N-linked (GlcNAc...) asparagine). At C526 the chain carries S-nitrosocysteine. Residues C555 and C561 are joined by a disulfide bond. Residue S565 is modified to O-acetylserine. N-linked (GlcNAc...) asparagine glycosylation occurs at N580.

Belongs to the prostaglandin G/H synthase family. Homodimer. Requires heme b as cofactor. Post-translationally, S-nitrosylation by NOS2 (iNOS) activates enzyme activity. S-nitrosylation may take place on different Cys residues in addition to Cys-526. In terms of processing, acetylated at Ser-565 by SPHK1. During neuroinflammation, acetylation by SPHK1 promotes neuronal secretion of specialized preresolving mediators (SPMs), especially 15-R-lipoxin A4, which results in an increase of phagocytic microglia. In terms of tissue distribution, highest expression in kidney and urinary bladder.

It is found in the microsome membrane. It localises to the endoplasmic reticulum membrane. Its subcellular location is the nucleus inner membrane. The protein localises to the nucleus outer membrane. It catalyses the reaction (5Z,8Z,11Z,14Z)-eicosatetraenoate + AH2 + 2 O2 = prostaglandin H2 + A + H2O. It carries out the reaction (5Z,8Z,11Z,14Z)-eicosatetraenoate + 2 O2 = prostaglandin G2. The catalysed reaction is prostaglandin G2 + AH2 = prostaglandin H2 + A + H2O. The enzyme catalyses (5Z,8Z,11Z,14Z,17Z)-eicosapentaenoate + 2 O2 = prostaglandin G3. It catalyses the reaction prostaglandin G3 + AH2 = prostaglandin H3 + A + H2O. It carries out the reaction (8Z,11Z,14Z)-eicosatrienoate + 2 O2 = prostaglandin G1. The catalysed reaction is prostaglandin G1 + AH2 = prostaglandin H1 + A + H2O. The enzyme catalyses 2-(5Z,8Z,11Z,14Z)-eicosatetraenoyl-sn-glycero-3-phosphoethanolamine + 2 O2 = 2-(prostaglandin G2)-sn-glycero-3-phosphoethanolamine. It catalyses the reaction 2-(prostaglandin G2)-sn-glycero-3-phosphoethanolamine + AH2 = 2-(prostaglandin H2)-sn-glycero-3-phosphoethanolamine + A + H2O. It carries out the reaction 2-(5Z,8Z,11Z,14Z)-eicosatetraenoyl-sn-glycero-3-phosphocholine + 2 O2 = 2-(prostaglandin G2)-sn-glycero-3-phosphocholine. The catalysed reaction is 2-(prostaglandin G2)-sn-glycero-3-phosphocholine + AH2 = 2-(prostaglandin H2)-sn-glycero-3-phosphocholine + A + H2O. The enzyme catalyses (15S)-hydroperoxy-(5Z,8Z,11Z,13E)-eicosatetraenoate + AH2 = (15S)-hydroxy-(5Z,8Z,11Z,13E)-eicosatetraenoate + A + H2O. It catalyses the reaction 2-(5Z,8Z,11Z,14Z)-eicosatetraenoyl-sn-glycero-3-phosphocholine + AH2 + O2 = 2-[(15S)-hydroxy-(5Z,8Z,11Z,13E)-eicosatetraenoyl]-sn-glycero-3-phosphocholine + A + H2O. It carries out the reaction 2-(5Z,8Z,11Z,14Z)-eicosatetraenoyl-sn-glycero-3-phosphocholine + AH2 + O2 = 2-[(15R)-hydroxy-(5Z,8Z,11Z,13E)-eicosatetraenoyl]-sn-glycero-3-phosphocholine + A + H2O. The catalysed reaction is 2-(5Z,8Z,11Z,14Z)-eicosatetraenoyl-sn-glycero-3-phosphocholine + AH2 + O2 = 2-[(11R)-hydroxy-(5Z,8Z,12E,14Z)-eicosatetraenoyl]-sn-glycero-3-phosphocholine + A + H2O. The enzyme catalyses (9Z,12Z)-octadecadienoate + AH2 + O2 = 9-hydroxy-(10E,12Z)-octadecadienoate + A + H2O. It catalyses the reaction (9Z,12Z)-octadecadienoate + AH2 + O2 = 13-hydroxy-(9Z,11E)-octadecadienoate + A + H2O. It carries out the reaction (5Z,8Z,11Z,14Z)-eicosatetraenoate + AH2 + O2 = (15R)-hydroxy-(5Z,8Z,11Z,13E)-eicosatetraenoate + A + H2O. The catalysed reaction is (5Z,8Z,11Z,14Z)-eicosatetraenoate + AH2 + O2 = (11R)-hydroxy-(5Z,8Z,12E,14Z)-eicosatetraenoate + A + H2O. The enzyme catalyses (5Z,8Z,11Z,14Z,17Z)-eicosapentaenoate + AH2 + O2 = (11R)-hydroxy-(5Z,8Z,12E,14Z,17Z)-eicosapentaenoate + A + H2O. It catalyses the reaction (5Z,8Z,11Z,14Z,17Z)-eicosapentaenoate + AH2 + O2 = (18S)-hydroxy-(5Z,8Z,11Z,14Z,16E)-eicosapentaenoate + A + H2O. It carries out the reaction (5Z,8Z,11Z,14Z,17Z)-eicosapentaenoate + AH2 + O2 = (18R)-hydroxy-(5Z,8Z,11Z,14Z,16E)-eicosapentaenoate + A + H2O. The catalysed reaction is (5Z,8Z,11Z,14Z,17Z)-eicosapentaenoate + AH2 + O2 = (15R)-hydroxy-(5Z,8Z,11Z,13E,17Z)-eicosapentaenoate + A + H2O. The enzyme catalyses (5Z,8Z,11Z,14Z,17Z)-eicosapentaenoate + AH2 + O2 = (15S)-hydroxy-(5Z,8Z,11Z,13E,17Z)-eicosapentaenoate + A + H2O. It catalyses the reaction (7Z,10Z,13Z,16Z,19Z)-docosapentaenoate + AH2 + O2 = 13R-hydroxy-(7Z,10Z,14E,16Z,19Z)-docosapentaenoate + A + H2O. It carries out the reaction (4Z,7Z,10Z,13Z,16Z,19Z)-docosahexaenoate + AH2 + O2 = 13-hydroxy-(4Z,7Z,10Z,14E,16Z,19Z)-docosahexaenoate + A + H2O. The catalysed reaction is (5S)-hydroxy-(6E,8Z,11Z,14Z)-eicosatetraenoate + AH2 + O2 = (5S,15R)-dihydroxy-(6E,8Z,11Z,13E)-eicosatetraenoate + A + H2O. The enzyme catalyses (4Z,7Z,10Z,13Z,16Z,19Z)-docosahexaenoate + AH2 + O2 = 17R-hydroxy-(4Z,7Z,10Z,13Z,15E,19Z)-docosahexaenoate + A + H2O. It catalyses the reaction (5S)-hydroxy-(6E,8Z,11Z,14Z)-eicosatetraenoate + AH2 + O2 = (5S,15S)-dihydroxy-(6E,8Z,11Z,13E)-eicosatetraenoate + A + H2O. It carries out the reaction (5S)-hydroxy-(6E,8Z,11Z,14Z)-eicosatetraenoate + AH2 + O2 = (5S,11R)-dihydroxy-(6E,8Z,12E,14Z)-eicosatetraenoate + A + H2O. The catalysed reaction is 2-(5Z,8Z,11Z,14Z-eicosatetraenoyl)-glycerol + 2 O2 = 2-glyceryl-prostaglandin G2. The enzyme catalyses 2-glyceryl-prostaglandin G2 + AH2 = 2-glyceryl-prostaglandin H2 + A + H2O. It catalyses the reaction (5Z,8Z,11Z,14Z)-eicosatetraenoate + O2 = (15R)-hydroperoxy-(5Z,8Z,11Z,13E)-eicosatetraenoate. It carries out the reaction (5Z,8Z,11Z,14Z)-eicosatetraenoate + O2 = 11R-hydroperoxy-(5Z,8Z,12E,14Z)-eicosatetraenoate. The catalysed reaction is (9Z,12Z)-octadecadienoate + AH2 + O2 = (9R)-hydroxy-(10E,12Z)-octadecadienoate + A + H2O. The enzyme catalyses (9Z,12Z)-octadecadienoate + AH2 + O2 = (9S)-hydroxy-(10E,12Z)-octadecadienoate + A + H2O. It catalyses the reaction (9Z,12Z)-octadecadienoate + AH2 + O2 = (13S)-hydroxy-(9Z,11E)-octadecadienoate + A + H2O. It carries out the reaction (9Z,12Z)-octadecadienoate + AH2 + O2 = (13R)-hydroxy-(9Z,11E)-octadecadienoate + A + H2O. The protein operates within lipid metabolism; prostaglandin biosynthesis. Dual cyclooxygenase and peroxidase in the biosynthesis pathway of prostanoids, a class of C20 oxylipins mainly derived from arachidonate ((5Z,8Z,11Z,14Z)-eicosatetraenoate, AA, C20:4(n-6)), with a particular role in the inflammatory response. The cyclooxygenase activity oxygenates AA to the hydroperoxy endoperoxide prostaglandin G2 (PGG2), and the peroxidase activity reduces PGG2 to the hydroxy endoperoxide prostaglandin H2 (PGH2), the precursor of all 2-series prostaglandins and thromboxanes. This complex transformation is initiated by abstraction of hydrogen at carbon 13 (with S-stereochemistry), followed by insertion of molecular O2 to form the endoperoxide bridge between carbon 9 and 11 that defines prostaglandins. The insertion of a second molecule of O2 (bis-oxygenase activity) yields a hydroperoxy group in PGG2 that is then reduced to PGH2 by two electrons. Similarly catalyzes successive cyclooxygenation and peroxidation of dihomo-gamma-linoleate (DGLA, C20:3(n-6)) and eicosapentaenoate (EPA, C20:5(n-3)) to corresponding PGH1 and PGH3, the precursors of 1- and 3-series prostaglandins. In an alternative pathway of prostanoid biosynthesis, converts 2-arachidonoyl lysophopholipids to prostanoid lysophopholipids, which are then hydrolyzed by intracellular phospholipases to release free prostanoids. Metabolizes 2-arachidonoyl glycerol yielding the glyceryl ester of PGH2, a process that can contribute to pain response. Generates lipid mediators from n-3 and n-6 polyunsaturated fatty acids (PUFAs) via a lipoxygenase-type mechanism. Oxygenates PUFAs to hydroperoxy compounds and then reduces them to corresponding alcohols. Plays a role in the generation of resolution phase interaction products (resolvins) during both sterile and infectious inflammation. Metabolizes docosahexaenoate (DHA, C22:6(n-3)) to 17R-HDHA, a precursor of the D-series resolvins (RvDs). As a component of the biosynthetic pathway of E-series resolvins (RvEs), converts eicosapentaenoate (EPA, C20:5(n-3)) primarily to 18S-HEPE that is further metabolized by ALOX5 and LTA4H to generate 18S-RvE1 and 18S-RvE2. In vascular endothelial cells, converts docosapentaenoate (DPA, C22:5(n-3)) to 13R-HDPA, a precursor for 13-series resolvins (RvTs) shown to activate macrophage phagocytosis during bacterial infection. In activated leukocytes, contributes to oxygenation of hydroxyeicosatetraenoates (HETE) to diHETES (5,15-diHETE and 5,11-diHETE). Can also use linoleate (LA, (9Z,12Z)-octadecadienoate, C18:2(n-6)) as substrate and produce hydroxyoctadecadienoates (HODEs) in a regio- and stereospecific manner,being (9R)-HODE ((9R)-hydroxy-(10E,12Z)-octadecadienoate) and (13S)-HODE ((13S)-hydroxy-(9Z,11E)-octadecadienoate) its major products. During neuroinflammation, plays a role in neuronal secretion of specialized preresolving mediators (SPMs) 15R-lipoxin A4 that regulates phagocytic microglia. This chain is Prostaglandin G/H synthase 2 (PTGS2), found in Oryctolagus cuniculus (Rabbit).